The primary structure comprises 27 residues: ALWMTLLKKVLKAAAKALNAVLVGANA.

It belongs to the frog skin active peptide (FSAP) family. Dermaseptin subfamily. Monomer and oligomer. Forms aggregates in aqueous environments. Expressed by the skin glands.

It is found in the secreted. Potent antimicrobial peptide with activity against bacteria and protozoa. Also has activity against fungi. Also shows activity against enveloped herpes simplex virus type 1. Probably acts by disturbing membrane functions with its amphipathic structure. Binds to healthy erythrocytes (this binding is receptor independent), and has strong hemolytic activity. Does not bind to P.falciparum infected erythrocytes, but accumulates within the parasite. Kills the parasite, and only at high concentrations has a hemolytic activity on the host cell. In vitro, shows high spermicidal activities. The polypeptide is Dermaseptin-S4 (Phyllomedusa sauvagei (Sauvage's leaf frog)).